The chain runs to 96 residues: ESAT-6-like protein EsxH (96 aa).

Residues H14, H70, H76, and E77 each contribute to the Zn(2+) site.

It belongs to the WXG100 family. ESAT-6 subfamily. Forms a tight 1:1 complex with EsxG. When it is complexed to EsxG, interacts directly with host HGS/HRS.

The protein resides in the secreted. Functionally, esxH, in complex with EsxG, disrupts ESCRT function and impairs host phagosome maturation, thereby promoting intracellular bacterial growth. The complex acts by interacting, via EsxH, with the host hepatocyte growth factor-regulated tyrosine kinase substrate (HGS/HRS), a component of the ESCRT machinery. In Mycobacterium tuberculosis (strain ATCC 25618 / H37Rv), this protein is ESAT-6-like protein EsxH.